Consider the following 91-residue polypeptide: Acylphosphatase (91 aa).

In terms of domain architecture, Acylphosphatase-like spans 3–90 (QYRIIVDGRV…EGHHRFSIVY (88 aa)). Residues Arg-18 and Asn-36 contribute to the active site.

The protein belongs to the acylphosphatase family.

The catalysed reaction is an acyl phosphate + H2O = a carboxylate + phosphate + H(+). This chain is Acylphosphatase (acyP), found in Bacillus subtilis (strain 168).